A 399-amino-acid chain; its full sequence is S-adenosylmethionine synthase (399 aa).

Histidine 16 serves as a coordination point for ATP. Aspartate 18 provides a ligand contact to Mg(2+). Position 44 (glutamate 44) interacts with K(+). L-methionine-binding residues include glutamate 57 and glutamine 100. The flexible loop stretch occupies residues glutamine 100–aspartate 110. ATP is bound by residues aspartate 174 to lysine 176, arginine 241 to phenylalanine 242, aspartate 250, arginine 256 to lysine 257, alanine 273, and lysine 277. Aspartate 250 contributes to the L-methionine binding site. Position 281 (lysine 281) interacts with L-methionine.

It belongs to the AdoMet synthase family. Homotetramer; dimer of dimers. The cofactor is Mg(2+). Requires K(+) as cofactor.

It localises to the cytoplasm. It catalyses the reaction L-methionine + ATP + H2O = S-adenosyl-L-methionine + phosphate + diphosphate. It functions in the pathway amino-acid biosynthesis; S-adenosyl-L-methionine biosynthesis; S-adenosyl-L-methionine from L-methionine: step 1/1. In terms of biological role, catalyzes the formation of S-adenosylmethionine (AdoMet) from methionine and ATP. The overall synthetic reaction is composed of two sequential steps, AdoMet formation and the subsequent tripolyphosphate hydrolysis which occurs prior to release of AdoMet from the enzyme. The protein is S-adenosylmethionine synthase of Latilactobacillus sakei subsp. sakei (strain 23K) (Lactobacillus sakei subsp. sakei).